Reading from the N-terminus, the 273-residue chain is Histidine racemase (273 aa).

The Proton acceptor role is filled by cysteine 72. The active-site Proton donor is cysteine 211.

It belongs to the histidine racemase family. Homodimer.

The protein resides in the cytoplasm. The catalysed reaction is L-histidine = D-histidine. In terms of biological role, isomerase that catalyzes the conversion of L-histidine to D-histidine. Functions the biosynthesis of the metallophore staphylopine, which is involved in the acquisition of nickel, cobalt, zinc, copper, and iron, and thus enables bacterial growth inside the host, where metal access is limited. Therefore, this enzyme probably contributes to staphylococcal virulence. The reaction is reversible in vitro, the enzyme can produce D-histidine from the L-stereoisomer and vice versa. Appears to be specific for histidine as it cannot use other amino acids as substrate, including L-alanine and L-methionine. The polypeptide is Histidine racemase (Staphylococcus aureus (strain Mu50 / ATCC 700699)).